The sequence spans 303 residues: Thioesterase poxG (303 aa).

It belongs to the lcsJ thioesterase family.

It participates in secondary metabolite biosynthesis. Its function is as follows. Thioesterase; part of the gene cluster that mediates the biosynthesis of oxaleimides, cytotoxic compounds containing an unusual disubstituted succinimide moiety. The first step of the pathway is provided by the HR-PKS poxF that serves in a new mode of collaborative biosynthesis with the PKS-NRPS poxE, by providing the olefin containing amino acid substrate via the synthesis of an ACP-bound dec-4-enoate. The cytochrome P450 monooxygenase poxM-catalyzed oxidation at the alpha-position creates the enzyme-bound 2-hydroxydec-4-enoyl-ACP thioester, which may be prone to spontaneous hydrolysis to yield 2-hydroxydec-4-enoic acid due to increased electrophilicity of the carbonyl. 2-hydroxydec-4-enoic acid can then be further oxidized by poxM to yield the alpha-ketoacid 2-oxodec-4-enoicacid, which is reductively aminated by the aminotransferase poxL to yield (S,E)-2-aminodec-4-enoic acid. The Hybrid PKS-NRPS synthetase poxE then performs condensation between the octaketide product of its PKS modules and the amino group of (S,E)-2-aminodec-4-enoic acid which is activated and incorporated by the adenylation domain. The resulting aminoacyl product can be cyclized by the Diels-Alderase PoxQ and reductively released by the reductive (R) domain of poxE to yield an aldehyde intermediate. The released aldehyde is then substrate for a Knoevenagel condensation by the hydrolyase poxO followed by an oxidation at the 5-position of the pyrrolidone ring. The presence of the olefin from the amino acid building block allows for migration of the substituted allyl group to occur. This allylic transposition reaction takes place in a conjugate addition, semipinacol-like fashion to yield a succinimide intermediate. Iterative two-electron oxidations of the C7 methyl of the succinimide intermediate to the carboxylic acid can be catalyzed by one of two remaining cytochrome P450 monooxygenasess poxC or poxD to yield oxaleimide A. Subsequent oxidation yields the maleimide scaffold oxaleimide I. Both oxaleimide A and oxaleimide I can undergo oxidative modifications in the decalin ring to yield the series of products oxaleimides B to H. The protein is Thioesterase poxG of Penicillium oxalicum (strain 114-2 / CGMCC 5302) (Penicillium decumbens).